Reading from the N-terminus, the 620-residue chain is Glutathione-regulated potassium-efflux system protein KefC (620 aa).

The next 12 helical transmembrane spans lie at 4–24 (HTLIQALIYLGSAALIVPIAV), 26–46 (LGLGSVLGYLIAGCIIGPWGL), 54–74 (SILHFAEIGVVLMLFIIGLEL), 90–110 (GALQMVICGGLLGLFCMLLGL), 114–134 (VAELIGMTLALSSTAIAMQAM), 149–169 (FAVLLFQDIAAIPLVAMIPLL), 178–198 (MGAFALSALKVAGALVLVVLL), 218–238 (VFSAVALFLVFGFGLLLEEVG), 270–290 (GLLLGLFFIGVGMSIDFGTLL), 294–314 (LRIVILLLGFLIIKIAMLWLI), 327–347 (WFAVLLGQGSEFAFVVFGAAQ), and 359–379 (SLTLAVALSMAATPILLVILN). The 120-residue stretch at 399 to 518 (QPRVIIAGFG…AGVEKPERET (120 aa)) folds into the RCK N-terminal domain. Positions 597–620 (GWQGTEEGKHTGNMADEPETKPSS) are disordered.

It belongs to the monovalent cation:proton antiporter 2 (CPA2) transporter (TC 2.A.37) family. KefC subfamily. Homodimer. Interacts with the regulatory subunit KefF.

The protein localises to the cell inner membrane. Pore-forming subunit of a potassium efflux system that confers protection against electrophiles. Catalyzes K(+)/H(+) antiport. The polypeptide is Glutathione-regulated potassium-efflux system protein KefC (Escherichia coli O8 (strain IAI1)).